The primary structure comprises 202 residues: uncharacterized protein (202 aa).

Residues I175–F195 traverse the membrane as a helical segment.

The protein resides in the membrane. This is an uncharacterized protein from Dictyostelium discoideum (Social amoeba).